A 242-amino-acid polypeptide reads, in one-letter code: Type III pantothenate kinase (242 aa).

5-12 is an ATP binding site; the sequence is DLGNTRLK. Residues tyrosine 94 and 100-103 contribute to the substrate site; that span reads GCDR. Residue aspartate 102 is the Proton acceptor of the active site. Residue threonine 124 participates in ATP binding. Substrate is bound at residue threonine 175.

It belongs to the type III pantothenate kinase family. As to quaternary structure, homodimer. The cofactor is NH4(+). It depends on K(+) as a cofactor.

Its subcellular location is the cytoplasm. It carries out the reaction (R)-pantothenate + ATP = (R)-4'-phosphopantothenate + ADP + H(+). The protein operates within cofactor biosynthesis; coenzyme A biosynthesis; CoA from (R)-pantothenate: step 1/5. Its function is as follows. Catalyzes the phosphorylation of pantothenate (Pan), the first step in CoA biosynthesis. This chain is Type III pantothenate kinase, found in Psychrobacter arcticus (strain DSM 17307 / VKM B-2377 / 273-4).